Consider the following 764-residue polypeptide: 5-methyltetrahydropteroyltriglutamate--homocysteine methyltransferase (764 aa).

Residues 16-19 (RELK) and lysine 117 each bind 5-methyltetrahydropteroyltri-L-glutamate. Residues 442-444 (IGS) and glutamate 495 each bind L-homocysteine. L-methionine-binding positions include 442–444 (IGS) and glutamate 495. 5-methyltetrahydropteroyltri-L-glutamate-binding positions include 526 to 527 (RC) and tryptophan 572. Residue aspartate 610 coordinates L-homocysteine. An L-methionine-binding site is contributed by aspartate 610. Glutamate 616 is a 5-methyltetrahydropteroyltri-L-glutamate binding site. Zn(2+) is bound by residues histidine 652, cysteine 654, and glutamate 676. Histidine 705 (proton donor) is an active-site residue. Cysteine 737 serves as a coordination point for Zn(2+).

Belongs to the vitamin-B12 independent methionine synthase family. Requires Zn(2+) as cofactor.

The catalysed reaction is 5-methyltetrahydropteroyltri-L-glutamate + L-homocysteine = tetrahydropteroyltri-L-glutamate + L-methionine. The protein operates within amino-acid biosynthesis; L-methionine biosynthesis via de novo pathway; L-methionine from L-homocysteine (MetE route): step 1/1. Its function is as follows. Catalyzes the transfer of a methyl group from 5-methyltetrahydrofolate to homocysteine resulting in methionine formation. The sequence is that of 5-methyltetrahydropteroyltriglutamate--homocysteine methyltransferase from Bordetella bronchiseptica (strain ATCC BAA-588 / NCTC 13252 / RB50) (Alcaligenes bronchisepticus).